The primary structure comprises 394 residues: Cell division protein FtsZ (394 aa).

Residues 21 to 25 (GGGGN), 108 to 110 (GTG), Glu139, Arg143, and Asp187 each bind GTP.

The protein belongs to the FtsZ family. Homodimer. Polymerizes to form a dynamic ring structure in a strictly GTP-dependent manner. Interacts directly with several other division proteins.

It is found in the cytoplasm. In terms of biological role, essential cell division protein that forms a contractile ring structure (Z ring) at the future cell division site. The regulation of the ring assembly controls the timing and the location of cell division. One of the functions of the FtsZ ring is to recruit other cell division proteins to the septum to produce a new cell wall between the dividing cells. Binds GTP and shows GTPase activity. In Azotobacter vinelandii, this protein is Cell division protein FtsZ.